The chain runs to 363 residues: MKYRLIVALAMLVLSLPSQAERIKDIANVQGVRSNQLIGYGLVVGLPGTGEKTNYTEQTFTTMLKNFGINLPDNFRPKIKNVAVVAVHADMPAFIKPGQQLDVTVSSLGEAKSLRGGTLLQTFLKGVDGNVYAIAQGSLVVSGFSAEGLDGSKVIQNTPTVGRIPNGAIVERSVATPFSSGDYLTFNLRRADFSTAQRMADAINDLLGPDMARPLDATSVQVSAPRDVSQRVSFLATLENLDVIPAEESAKVIVNSRTGTIVVGQHVKLLPAAVTHGGLTVTIAEATQVSQPNALANGETVVTANTTIGVNESDRRMFMFSPGTTLDELVRAVNLVGAAPSDVLAILEALKVAGALHGELIII.

Positions 1-20 (MKYRLIVALAMLVLSLPSQA) are cleaved as a signal peptide.

It belongs to the FlgI family. The basal body constitutes a major portion of the flagellar organelle and consists of four rings (L,P,S, and M) mounted on a central rod.

It is found in the periplasm. Its subcellular location is the bacterial flagellum basal body. Its function is as follows. Assembles around the rod to form the L-ring and probably protects the motor/basal body from shearing forces during rotation. This chain is Flagellar P-ring protein, found in Shewanella sp. (strain ANA-3).